Consider the following 120-residue polypeptide: Glycine cleavage system H protein (120 aa).

One can recognise a Lipoyl-binding domain in the interval 17 to 99 (IATVGITAHA…RGAGWFFKLK (83 aa)). Position 58 is an N6-lipoyllysine (Lys58).

The protein belongs to the GcvH family. In terms of assembly, the glycine cleavage system is composed of four proteins: P, T, L and H. (R)-lipoate serves as cofactor.

Its function is as follows. The glycine cleavage system catalyzes the degradation of glycine. The H protein shuttles the methylamine group of glycine from the P protein to the T protein. In Allorhizobium ampelinum (strain ATCC BAA-846 / DSM 112012 / S4) (Agrobacterium vitis (strain S4)), this protein is Glycine cleavage system H protein.